A 343-amino-acid polypeptide reads, in one-letter code: Armadillo repeat-containing protein 10 (343 aa).

A helical transmembrane segment spans residues 5-27 (RGAGWVAAGLLLGAGACYCIYRL). Residues 43 to 83 (SKSAGALEEGTSEGQLCGRSARPQTGGTWESQWSKTSQPED) form a disordered region. Position 45 is a phosphoserine (Ser45). At Glu50 the chain carries Phosphothreonine. Over residues 64 to 82 (RPQTGGTWESQWSKTSQPE) the composition is skewed to polar residues. Residue Thr85 is modified to Phosphothreonine. One copy of the ARM repeat lies at 138–180 (GGIPIVANKINHSNQSIKEKALNALNNLSVNVENQIKIKIYIS).

Interacts with the DNA-binding domain of p53/TP53. Expressed in all tissues tested with higher expression in placenta, liver, kidney, heart and brain.

The protein localises to the endoplasmic reticulum membrane. It is found in the mitochondrion outer membrane. Functionally, may play a role in cell survival and cell growth. May suppress the transcriptional activity of p53/TP53. This is Armadillo repeat-containing protein 10 (ARMC10) from Homo sapiens (Human).